A 164-amino-acid polypeptide reads, in one-letter code: General odorant-binding protein 1 (164 aa).

The first 18 residues, 1-18 (MWKLVVVLTVNLLQGALT), serve as a signal peptide directing secretion. 3 disulfides stabilise this stretch: cysteine 37/cysteine 72, cysteine 68/cysteine 126, and cysteine 115/cysteine 135.

The protein belongs to the PBP/GOBP family. Homodimer. As to expression, antenna.

Its function is as follows. Present in the aqueous fluid surrounding olfactory sensory dendrites and are thought to aid in the capture and transport of hydrophobic odorants into and through this fluid. The polypeptide is General odorant-binding protein 1 (Bombyx mori (Silk moth)).